The following is a 402-amino-acid chain: SH3 and cysteine-rich domain-containing protein (402 aa).

Positions methionine 1 to phenylalanine 47 are disordered. The Phorbol-ester/DAG-type zinc-finger motif lies at alanine 107–cysteine 159. A disordered region spans residues glutamine 211–tyrosine 247. 2 consecutive SH3 domains span residues leucine 285–glutamine 344 and lysine 347–isoleucine 402.

Interacts (via SH3 domains) with CACNA1S. Interacts with CACNA1H. Interacts with CACNA1C.

It localises to the cytoplasm. The protein resides in the cytosol. It is found in the cell membrane. Its subcellular location is the sarcolemma. Its function is as follows. Promotes expression of the ion channel CACNA1H at the cell membrane, and thereby contributes to the regulation of channel activity. Plays a minor and redundant role in promoting the expression of calcium channel CACNA1S at the cell membrane, and thereby contributes to increased channel activity. Slows down the inactivation rate of the calcium channel CACNA1C. The polypeptide is SH3 and cysteine-rich domain-containing protein (STAC) (Homo sapiens (Human)).